The chain runs to 288 residues: Release factor glutamine methyltransferase (288 aa).

Residues 123-127 (GTGSG), aspartate 146, and asparagine 190 each bind S-adenosyl-L-methionine. A substrate-binding site is contributed by 190–193 (NPPY).

This sequence belongs to the protein N5-glutamine methyltransferase family. PrmC subfamily.

The enzyme catalyses L-glutaminyl-[peptide chain release factor] + S-adenosyl-L-methionine = N(5)-methyl-L-glutaminyl-[peptide chain release factor] + S-adenosyl-L-homocysteine + H(+). In terms of biological role, methylates the class 1 translation termination release factors RF1/PrfA and RF2/PrfB on the glutamine residue of the universally conserved GGQ motif. This is Release factor glutamine methyltransferase from Bacillus subtilis (strain 168).